Consider the following 605-residue polypeptide: Apoptosis-inducing factor 3 (605 aa).

Residues 18–29 (VLPEKERGKEEL) show a composition bias toward basic and acidic residues. A disordered region spans residues 18-44 (VLPEKERGKEELSASGKGSPRGYQGNG). Residues 70 to 165 (ATVCHVKDLE…VKIEKEKVTI (96 aa)) enclose the Rieske domain. Residues C109, H111, C128, and H131 each contribute to the [2Fe-2S] cluster site. FAD is bound by residues 201-205 (GAGAA), R235, K240, V270, D467, and W514.

Belongs to the FAD-dependent oxidoreductase family.

The protein localises to the mitochondrion. Induces apoptosis through a caspase dependent pathway. Reduces mitochondrial membrane potential. In Mus musculus (Mouse), this protein is Apoptosis-inducing factor 3 (Aifm3).